Consider the following 242-residue polypeptide: Aspartate/glutamate leucyltransferase (242 aa).

Belongs to the R-transferase family. Bpt subfamily.

The protein localises to the cytoplasm. The catalysed reaction is N-terminal L-glutamyl-[protein] + L-leucyl-tRNA(Leu) = N-terminal L-leucyl-L-glutamyl-[protein] + tRNA(Leu) + H(+). It catalyses the reaction N-terminal L-aspartyl-[protein] + L-leucyl-tRNA(Leu) = N-terminal L-leucyl-L-aspartyl-[protein] + tRNA(Leu) + H(+). Functionally, functions in the N-end rule pathway of protein degradation where it conjugates Leu from its aminoacyl-tRNA to the N-termini of proteins containing an N-terminal aspartate or glutamate. This Alcanivorax borkumensis (strain ATCC 700651 / DSM 11573 / NCIMB 13689 / SK2) protein is Aspartate/glutamate leucyltransferase.